We begin with the raw amino-acid sequence, 115 residues long: Large ribosomal subunit protein uL22 (115 aa).

The protein belongs to the universal ribosomal protein uL22 family. In terms of assembly, part of the 50S ribosomal subunit.

Functionally, this protein binds specifically to 23S rRNA; its binding is stimulated by other ribosomal proteins, e.g. L4, L17, and L20. It is important during the early stages of 50S assembly. It makes multiple contacts with different domains of the 23S rRNA in the assembled 50S subunit and ribosome. Its function is as follows. The globular domain of the protein is located near the polypeptide exit tunnel on the outside of the subunit, while an extended beta-hairpin is found that lines the wall of the exit tunnel in the center of the 70S ribosome. The sequence is that of Large ribosomal subunit protein uL22 from Coxiella burnetii (strain CbuK_Q154) (Coxiella burnetii (strain Q154)).